A 292-amino-acid chain; its full sequence is Acetyl-coenzyme A carboxylase carboxyl transferase subunit beta (292 aa).

Residues 29-292 form the CoA carboxyltransferase N-terminal domain; that stretch reads LWSKCPECGQ…HGCESRVASS (264 aa). Zn(2+) contacts are provided by C33, C36, C52, and C55. The C4-type zinc-finger motif lies at 33-55; sequence CPECGQVVYRKDLLSNASVCGNC.

It belongs to the AccD/PCCB family. As to quaternary structure, acetyl-CoA carboxylase is a heterohexamer composed of biotin carboxyl carrier protein (AccB), biotin carboxylase (AccC) and two subunits each of ACCase subunit alpha (AccA) and ACCase subunit beta (AccD). It depends on Zn(2+) as a cofactor.

It localises to the cytoplasm. The catalysed reaction is N(6)-carboxybiotinyl-L-lysyl-[protein] + acetyl-CoA = N(6)-biotinyl-L-lysyl-[protein] + malonyl-CoA. The protein operates within lipid metabolism; malonyl-CoA biosynthesis; malonyl-CoA from acetyl-CoA: step 1/1. Functionally, component of the acetyl coenzyme A carboxylase (ACC) complex. Biotin carboxylase (BC) catalyzes the carboxylation of biotin on its carrier protein (BCCP) and then the CO(2) group is transferred by the transcarboxylase to acetyl-CoA to form malonyl-CoA. The sequence is that of Acetyl-coenzyme A carboxylase carboxyl transferase subunit beta from Synechococcus sp. (strain CC9311).